A 70-amino-acid polypeptide reads, in one-letter code: Large ribosomal subunit protein bL32 (70 aa).

A compositionally biased stretch (basic residues) spans 1–19 (MAVPKKKTSPSRRGMRRSH). The tract at residues 1-21 (MAVPKKKTSPSRRGMRRSHQA) is disordered.

This sequence belongs to the bacterial ribosomal protein bL32 family.

In Granulibacter bethesdensis (strain ATCC BAA-1260 / CGDNIH1), this protein is Large ribosomal subunit protein bL32.